Here is a 274-residue protein sequence, read N- to C-terminus: Orotidine 5'-phosphate decarboxylase (274 aa).

Residues D40, 62–64 (KTH), 93–102 (DRKFVDIGNT), Y227, and R245 each bind substrate. K95 (proton donor) is an active-site residue.

It belongs to the OMP decarboxylase family.

The catalysed reaction is orotidine 5'-phosphate + H(+) = UMP + CO2. The protein operates within pyrimidine metabolism; UMP biosynthesis via de novo pathway; UMP from orotate: step 2/2. This chain is Orotidine 5'-phosphate decarboxylase (URA3), found in Coccidioides posadasii (strain RMSCC 757 / Silveira) (Valley fever fungus).